A 446-amino-acid chain; its full sequence is Iroquois-class homeodomain protein IRX-6 (446 aa).

Residues 146-208 (GAGRRKNATR…NARRRLKKEN (63 aa)) constitute a DNA-binding region (homeobox). 2 disordered regions span residues 208–273 (NKMT…EDEE) and 362–394 (AVEG…RLSV). The segment covering 217-226 (KGGEERKAEG) has biased composition (basic and acidic residues). Positions 256-273 (LEDLEEEEEEEEEAEDEE) are enriched in acidic residues.

It belongs to the TALE/IRO homeobox family.

Its subcellular location is the nucleus. Its function is as follows. Transcription factor. Binds to the iroquois binding site (IBS) motif of target genes to regulate gene expression; functions as a transcriptional activator or repressor. Modulates expression of RCVRN, VSX1, BHLHE22/BHLHB5 and TACR3/Nk3r. Required downstream of retinal bipolar cell specification for the terminal differentiation of type 2, type 3a and possibly type 6 bipolar cells. In Homo sapiens (Human), this protein is Iroquois-class homeodomain protein IRX-6 (IRX6).